We begin with the raw amino-acid sequence, 240 residues long: MPLTEHLRELRYRLIISIIAFLIGSGIAFYFAKYVFEILKEPILKSYPEVELITLSPTEPLFILIKISLAVGFIIASPVILYQFWRFIEPALYSHEKRAFIPLLLGSILLFMLGALFAYFIVLPLALKFLLGLGFTQLLATPYLSVDMYISFVLKLVVAFGIAFEMPIVLYVLQKAGVITPEQLASFRKYFIVIAFVIGAIIAPDVSTQVLMAIPLLLLYEISIFLGKLATRKKKEIQKA.

The next 6 helical transmembrane spans lie at 15–35 (IISI…AKYV), 61–81 (LFIL…PVIL), 103–123 (LLLG…FIVL), 152–172 (FVLK…VLYV), 191–211 (FIVI…TQVL), and 212–232 (MAIP…LATR).

The protein belongs to the TatC family. In terms of assembly, forms a complex with TatA.

Its subcellular location is the cell inner membrane. In terms of biological role, part of the twin-arginine translocation (Tat) system that transports large folded proteins containing a characteristic twin-arginine motif in their signal peptide across membranes. This chain is Sec-independent protein translocase protein TatC, found in Aquifex aeolicus (strain VF5).